The following is a 329-amino-acid chain: Segregation and condensation protein B (329 aa).

Disordered stretches follow at residues 1–39 (MTTG…GPAD), 252–274 (IVEK…SDPA), and 286–329 (SEAA…PKPE).

It belongs to the ScpB family. As to quaternary structure, homodimer. Homodimerization may be required to stabilize the binding of ScpA to the Smc head domains. Component of the Structural Maintenance of Chromosome (SMC) condensin-like complex composed of ScpA, ScpB and the Smc homodimer. ScpA and ScpB bind to the head domain of Smc, the presence of the three proteins is required for the association of the complex with DNA.

The protein resides in the cytoplasm. A conditionally essential component of the chromosome segregation machinery. Required for chromosome condensation and partitioning. Important for positioning and anchoring of ParB-parS complexes (ori of replication) in the subpolar region, and of the ter replication site, as well as for segration of the ParB-parS complex and thus chromosome segregation. Probably acts via the formation of a condensin-like complex containing Smc, ScpA and ScpB that pulls DNA away from mid-cell into both cell halves. This chain is Segregation and condensation protein B, found in Myxococcus xanthus (strain DK1622).